The chain runs to 247 residues: 3-deoxy-manno-octulosonate cytidylyltransferase (247 aa).

This sequence belongs to the KdsB family.

Its subcellular location is the cytoplasm. It catalyses the reaction 3-deoxy-alpha-D-manno-oct-2-ulosonate + CTP = CMP-3-deoxy-beta-D-manno-octulosonate + diphosphate. It functions in the pathway nucleotide-sugar biosynthesis; CMP-3-deoxy-D-manno-octulosonate biosynthesis; CMP-3-deoxy-D-manno-octulosonate from 3-deoxy-D-manno-octulosonate and CTP: step 1/1. It participates in bacterial outer membrane biogenesis; lipopolysaccharide biosynthesis. Its function is as follows. Activates KDO (a required 8-carbon sugar) for incorporation into bacterial lipopolysaccharide in Gram-negative bacteria. This is 3-deoxy-manno-octulosonate cytidylyltransferase from Methylorubrum populi (strain ATCC BAA-705 / NCIMB 13946 / BJ001) (Methylobacterium populi).